The sequence spans 78 residues: FXYD domain-containing ion transport regulator 7 (78 aa).

At 1 to 22 the chain is on the extracellular side; sequence MATQVPTKVPQDPDPFYYDYDT. 2 O-linked (GlcNAc) threonine glycosylation sites follow: Thr-3 and Thr-7. A helical transmembrane segment spans residues 23 to 43; sequence VQTVGMTLATILFLLGILIIL. Over 44-78 the chain is Cytoplasmic; that stretch reads SKKVKCRKADSRSESPTCKSCKSELPSSAPGGGGV. The segment at 52–78 is disordered; that stretch reads ADSRSESPTCKSCKSELPSSAPGGGGV. Ser-71 carries the post-translational modification Phosphoserine.

This sequence belongs to the FXYD family. Regulatory subunit of the sodium/potassium-transporting ATPase which is composed of a catalytic alpha subunit, a non-catalytic beta subunit and an additional regulatory subunit. The regulatory subunit, a member of the FXYD protein family, modulates the enzymatic activity in a tissue- and isoform-specific way by changing affinities of the Na+/K+-ATPase toward Na(+), K(+) or ATP. In terms of processing, O-glycosylated; required for stabilization and translocation to the plasma membrane.

The protein localises to the cell membrane. Associates with and regulates the activity of the sodium/potassium-transporting ATPase (NKA) which catalyzes the hydrolysis of ATP coupled with the exchange of Na(+) and K(+) ions across the plasma membrane. Reduces the apparent affinity for external K(+), an effect that depends on the presence of external Na(+) and voltage. Increases the apparent affinity for intracellular Na(+). In Bos taurus (Bovine), this protein is FXYD domain-containing ion transport regulator 7 (FXYD7).